The primary structure comprises 931 residues: Isoleucine--tRNA ligase (931 aa).

The short motif at 57–67 is the 'HIGH' region element; it reads PFANGNIHMGH. Glu-556 is an L-isoleucyl-5'-AMP binding site. The short motif at 597–601 is the 'KMSKS' region element; sequence KMSKS. Lys-600 serves as a coordination point for ATP. Residues Cys-890, Cys-893, Cys-910, and Cys-913 each coordinate Zn(2+).

Belongs to the class-I aminoacyl-tRNA synthetase family. IleS type 1 subfamily. Monomer. Requires Zn(2+) as cofactor.

It localises to the cytoplasm. The catalysed reaction is tRNA(Ile) + L-isoleucine + ATP = L-isoleucyl-tRNA(Ile) + AMP + diphosphate. In terms of biological role, catalyzes the attachment of isoleucine to tRNA(Ile). As IleRS can inadvertently accommodate and process structurally similar amino acids such as valine, to avoid such errors it has two additional distinct tRNA(Ile)-dependent editing activities. One activity is designated as 'pretransfer' editing and involves the hydrolysis of activated Val-AMP. The other activity is designated 'posttransfer' editing and involves deacylation of mischarged Val-tRNA(Ile). This is Isoleucine--tRNA ligase from Lactobacillus delbrueckii subsp. bulgaricus (strain ATCC 11842 / DSM 20081 / BCRC 10696 / JCM 1002 / NBRC 13953 / NCIMB 11778 / NCTC 12712 / WDCM 00102 / Lb 14).